The chain runs to 658 residues: Glycogen debranching enzyme (658 aa).

The active-site Nucleophile is Asp-336. Residue Glu-371 is the Proton donor of the active site. The interval 459–484 (EANGEENRDGTNSNYSDNHGKEGLGG) is disordered.

It belongs to the glycosyl hydrolase 13 family.

The catalysed reaction is Hydrolysis of (1-&gt;6)-alpha-D-glucosidic linkages to branches with degrees of polymerization of three or four glucose residues in limit dextrin.. The protein operates within glycan degradation; glycogen degradation. In terms of biological role, removes maltotriose and maltotetraose chains that are attached by 1,6-alpha-linkage to the limit dextrin main chain, generating a debranched limit dextrin. The chain is Glycogen debranching enzyme from Salmonella choleraesuis (strain SC-B67).